Consider the following 292-residue polypeptide: MAISAKLVKELREKTGAGMMDCKKALTETDGDIDKAIDYLREKGIAKAAKKADRIAAEGLVHVEVKDNEAAIVEINSETDFVARNEGFQELVKEIANHILDSKVETVDALMESKLSSGKTVDERMKEAISTIGEKLSIRRFSIRTKTDNDAFGAYLHMGGRIGVLTVVEGTTDEEAAKDVAMHIAAINPKYVSSEQVSEEEINHEREVLKQQALNEGKPEKIVEKMVEGRLRKYLQEICAVDQNFVKNPDETVEAFLKAKGGKLTDFVRYEVGEGMEKREENFAEEVKGQMK.

The involved in Mg(2+) ion dislocation from EF-Tu stretch occupies residues 79–82 (TDFV).

Belongs to the EF-Ts family.

The protein resides in the cytoplasm. In terms of biological role, associates with the EF-Tu.GDP complex and induces the exchange of GDP to GTP. It remains bound to the aminoacyl-tRNA.EF-Tu.GTP complex up to the GTP hydrolysis stage on the ribosome. In Staphylococcus epidermidis (strain ATCC 12228 / FDA PCI 1200), this protein is Elongation factor Ts.